A 219-amino-acid polypeptide reads, in one-letter code: Small ribosomal subunit protein eS1 (219 aa).

Belongs to the eukaryotic ribosomal protein eS1 family. In terms of assembly, component of the small ribosomal subunit. Mature ribosomes consist of a small (40S) and a large (60S) subunit. The 40S subunit contains about 33 different proteins and 1 molecule of RNA (18S). The 60S subunit contains about 49 different proteins and 3 molecules of RNA (25S, 5.8S and 5S).

The protein resides in the cytoplasm. The sequence is that of Small ribosomal subunit protein eS1 from Guillardia theta (Cryptophyte).